We begin with the raw amino-acid sequence, 262 residues long: MKFVALALTLLLALGSQANLFQADAPTQLEHYKAAALVYLNQVKDQAEKALDNLDGTDYEQYKLQLSESLTKLQEYAQTTSQALTPYAETISTQLMENTKQLRERVMTDVEDLRSKLEPHRAELYTALQKHIDEYREKLEPVFQEYSALNRQNAEQLRAKLEPLMDDIRKAFESNIEETKSKVVPMVEAVRTKLTERLEDLRTMAAPYAEEYKEQLVKAVEEAREKIAPHTQDLQTRMEPYMENVRTTFAQMYETIAKAIQA.

The first 18 residues, 1-18 (MKFVALALTLLLALGSQA), serve as a signal peptide directing secretion. The tract at residues 32-63 (YKAAALVYLNQVKDQAEKALDNLDGTDYEQYK) is 3 X approximate tandem repeats. 2 tandem repeats follow at residues 64 to 85 (LQLS…QALT) and 87 to 107 (YAET…ERVM). Residues 64–262 (LQLSESLTKL…YETIAKAIQA (199 aa)) form a 10 X approximate tandem repeats region. Residues 108–118 (TDVEDLRSKLE) form a 3; half-length repeat. 5 consecutive repeat copies span residues 119 to 140 (PHRA…EKLE), 141 to 162 (PVFQ…AKLE), 163 to 184 (PLMD…SKVV), 185 to 206 (PMVE…TMAA), and 207 to 228 (PYAE…EKIA). One copy of the 9; half-length repeat lies at 229–239 (PHTQDLQTRME). Residues 240 to 262 (PYMENVRTTFAQMYETIAKAIQA) form repeat 10.

The protein belongs to the apolipoprotein A1/A4/E family. Homodimer. Interacts with naxe and yjefn3.

The protein resides in the secreted. Its function is as follows. Participates in the reverse transport of cholesterol from tissues to the liver for excretion by promoting cholesterol efflux from tissues and by acting as a cofactor for the lecithin cholesterol acyltransferase (LCAT). The chain is Apolipoprotein A-Ia from Danio rerio (Zebrafish).